Here is a 261-residue protein sequence, read N- to C-terminus: Neurovirulence factor ICP34.5 (261 aa).

Basic residues predominate over residues 1-17 (MSRRRGPRRRGPRRRPR). The tract at residues 1-19 (MSRRRGPRRRGPRRRPRPG) is required for nucleolar localization. Disordered stretches follow at residues 1-59 (MSRR…SAPA), 75-135 (DSDD…LALR), and 145-164 (RLSL…APRG). 4 consecutive repeats follow at residues 3–7 (RRRGP), 8–12 (RRRGP), 16–23 (PRPGAPAV), and 24–31 (PRPGAPAV). Residues 3 to 12 (RRRGPRRRGP) form a 2 X 5 AA tandem repeats of R-R-R-G-P region. Positions 16 to 31 (PRPGAPAVPRPGAPAV) are 2 X 8 AA tandem repeats of P-R-P-G-A-P-A-V. Positions 18–32 (PGAPAVPRPGAPAVP) are enriched in pro residues. A compositionally biased stretch (acidic residues) spans 75–88 (DSDDADYAGNDDAE). The segment covering 101-111 (APEAPHAAPAA) has biased composition (low complexity). The Nuclear export signal motif lies at 128–137 (LPPHLALRLR). The interval 163–176 (RGKVCFSPRVQVRH) is binding to PP1CA. The interaction with host PPP1CA stretch occupies residues 163 to 176 (RGKVCFSPRVQVRH). The interval 178–261 (VAWETAARLA…AAAGPGRRAV (84 aa)) is important for interferon resistance. The Bipartite nuclear localization signal motif lies at 188-206 (RRGSWARERADRDRFRRRV). An interaction with host EIF2S1/EIF-2ALPHA region spans residues 206 to 221 (VAAAEAVIGPCLEPEA). Positions 223–261 (ARARARARAHEDGGPAEEEEAAAAARGSSAAAGPGRRAV) are disordered. Residues 244 to 261 (AAAARGSSAAAGPGRRAV) show a composition bias toward low complexity.

Belongs to the PPP1R15 family. In terms of assembly, interacts with host PPP1CA to form a high-molecular-weight complex that dephosphorylates EIF2S1/eIF-2alpha. Interacts with host EIF2S1/eIF-2alpha; this interaction is crucial for the specific dephosphorylation of EIF2S1/eIF-2alpha by PPP1CA.

Its subcellular location is the host cytoplasm. It is found in the host nucleus. The protein resides in the host nucleolus. The protein localises to the virion. Its function is as follows. Plays essential roles in viral nuclear egress to mediate capsid transit across the nuclear membrane and also in the inhibition of host immune response and integrated stress response (ISR). Facilitates nuclear egress cooperatively with host C1QBP and protein kinase C/PKC to induce lamin A/C phosphorylation and subsequent reorganization. In turn, lamina disassembles and nuclear egress occurs. Recruits the serine/threonine-protein phosphatase PPP1CA/PP1-alpha to dephosphorylate the translation initiation factor EIF2S1/eIF-2alpha, thereby couteracting the host shutoff of protein synthesis involving double-stranded RNA-dependent protein kinase EIF2AK2/PKR. Also down-modulates the host MHC class II proteins cell surface expression. Acts as a neurovirulence factor that has a profound effect on the growth of the virus in central nervous system tissue, probably through its ability to maintain an environment favorable for viral replication. This is Neurovirulence factor ICP34.5 (RL1) from Human herpesvirus 2 (strain HG52) (HHV-2).